A 305-amino-acid polypeptide reads, in one-letter code: UDP-3-O-acyl-N-acetylglucosamine deacetylase (305 aa).

Zn(2+) contacts are provided by histidine 79, histidine 238, and aspartate 242. Histidine 265 (proton donor) is an active-site residue.

Belongs to the LpxC family. Zn(2+) serves as cofactor.

The enzyme catalyses a UDP-3-O-[(3R)-3-hydroxyacyl]-N-acetyl-alpha-D-glucosamine + H2O = a UDP-3-O-[(3R)-3-hydroxyacyl]-alpha-D-glucosamine + acetate. The protein operates within glycolipid biosynthesis; lipid IV(A) biosynthesis; lipid IV(A) from (3R)-3-hydroxytetradecanoyl-[acyl-carrier-protein] and UDP-N-acetyl-alpha-D-glucosamine: step 2/6. Functionally, catalyzes the hydrolysis of UDP-3-O-myristoyl-N-acetylglucosamine to form UDP-3-O-myristoylglucosamine and acetate, the committed step in lipid A biosynthesis. In Sodalis glossinidius (strain morsitans), this protein is UDP-3-O-acyl-N-acetylglucosamine deacetylase.